A 394-amino-acid polypeptide reads, in one-letter code: Choline/ethanolamine kinase (394 aa).

Residue Ala2 is modified to N-acetylalanine. The tract at residues 22–42 (GLLDAKCPEPIPNRRRSSSLS) is disordered. Residues 75–81 (SGGLSNL), Arg104, 146–152 (QYLPSRP), Gln244, and Asp264 each bind ATP. 77 to 79 (GLS) is a binding site for substrate.

Belongs to the choline/ethanolamine kinase family. As to quaternary structure, homodimer, and heterodimer with CHKA.

It catalyses the reaction choline + ATP = phosphocholine + ADP + H(+). The catalysed reaction is ethanolamine + ATP = phosphoethanolamine + ADP + H(+). Its pathway is phospholipid metabolism; phosphatidylethanolamine biosynthesis; phosphatidylethanolamine from ethanolamine: step 1/3. In terms of biological role, has a key role in phospholipid metabolism, and catalyzes the first step of phosphatidylethanolamine and phosphatidylcholine biosynthesis. The protein is Choline/ethanolamine kinase (Chkb) of Rattus norvegicus (Rat).